The following is a 467-amino-acid chain: Sugar transporter ERD6-like 11 (467 aa).

12 helical membrane-spanning segments follow: residues 26–46, 75–95, 105–125, 128–148, 155–177, 183–203, 266–286, 301–321, 328–348, 359–379, 402–422, and 428–448; these read ITACVILSTFVAVCSAFSYGC, FLNVGGAVGALFSGQLAVILG, FFCVFGWLSIAFAKNVFWLDL, ISLGIGVGLISYVVPVYIAEI, GAFTASNQLLQNSGVSLIYFFGT, VMAVIGAIPCILQTIGIFFIP, LVVGIGLMLIQQLSGASGITY, LGSMIFGVFVIPKALVGLILV, PLLLASAVGMSIGSLLIGVSF, LIPIFVFVNILVYFGCFAFGI, IVALTSWTSGWFVSYAFNFMF, and GTFYIFAAVGGMSFIFIWMLV.

This sequence belongs to the major facilitator superfamily. Sugar transporter (TC 2.A.1.1) family.

It is found in the membrane. Its function is as follows. Sugar transporter. The protein is Sugar transporter ERD6-like 11 of Arabidopsis thaliana (Mouse-ear cress).